We begin with the raw amino-acid sequence, 267 residues long: 2-keto-3-deoxy-L-rhamnonate aldolase (267 aa).

The Proton acceptor role is filled by histidine 49. Substrate is bound at residue glutamine 151. Mg(2+) is bound at residue glutamate 153. Residues alanine 178 and aspartate 179 each contribute to the substrate site. Aspartate 179 lines the Mg(2+) pocket.

It belongs to the HpcH/HpaI aldolase family. KDR aldolase subfamily. In terms of assembly, homohexamer. Requires Mg(2+) as cofactor.

It carries out the reaction 2-dehydro-3-deoxy-L-rhamnonate = (S)-lactaldehyde + pyruvate. In terms of biological role, catalyzes the reversible retro-aldol cleavage of 2-keto-3-deoxy-L-rhamnonate (KDR) to pyruvate and lactaldehyde. This is 2-keto-3-deoxy-L-rhamnonate aldolase from Klebsiella pneumoniae subsp. pneumoniae (strain ATCC 700721 / MGH 78578).